A 411-amino-acid chain; its full sequence is 1-deoxy-D-xylulose 5-phosphate reductoisomerase (411 aa).

Positions 12, 13, 14, 15, and 127 each coordinate NADPH. K128 contacts 1-deoxy-D-xylulose 5-phosphate. E129 contacts NADPH. Mn(2+) is bound at residue D153. Residues S154, E155, S189, and H212 each contribute to the 1-deoxy-D-xylulose 5-phosphate site. E155 serves as a coordination point for Mn(2+). Residue G218 participates in NADPH binding. 4 residues coordinate 1-deoxy-D-xylulose 5-phosphate: S225, N230, K231, and E234. E234 is a binding site for Mn(2+).

The protein belongs to the DXR family. Mg(2+) serves as cofactor. It depends on Mn(2+) as a cofactor.

The catalysed reaction is 2-C-methyl-D-erythritol 4-phosphate + NADP(+) = 1-deoxy-D-xylulose 5-phosphate + NADPH + H(+). It participates in isoprenoid biosynthesis; isopentenyl diphosphate biosynthesis via DXP pathway; isopentenyl diphosphate from 1-deoxy-D-xylulose 5-phosphate: step 1/6. Its function is as follows. Catalyzes the NADPH-dependent rearrangement and reduction of 1-deoxy-D-xylulose-5-phosphate (DXP) to 2-C-methyl-D-erythritol 4-phosphate (MEP). The sequence is that of 1-deoxy-D-xylulose 5-phosphate reductoisomerase from Colwellia psychrerythraea (strain 34H / ATCC BAA-681) (Vibrio psychroerythus).